We begin with the raw amino-acid sequence, 119 residues long: Immunity protein WapI (119 aa).

Immunity protein component of a toxin-immunity protein module, which functions as a cellular contact-dependent growth inhibition (CDI) system. Neutralizes the tRNase activity of cognate toxin WapA upon expression in E.coli. Does not inhibit WapA from other strains of B.subtilis. The WapA C-terminus cannot be expressed on its own in E.coli, however it can be cloned in the presence of its cognate immunity protein gene. Cell contact is probably necessary for growth inhibition. The polypeptide is Immunity protein WapI (wapI) (Bacillus subtilis subsp. natto (strain BEST195)).